We begin with the raw amino-acid sequence, 85 residues long: Phycobilisome 9.7 kDa linker polypeptide, phycocyanin-associated, rod (85 aa).

One can recognise a CpcD-like domain in the interval 16 to 74 (NRVFVYEVEGLRQNEQTDNNRYQIRNSSTIEIQVPYSRMNEEDRRITRLGGRIVNIRPA).

This sequence belongs to the phycobilisome linker protein family.

Its subcellular location is the cellular thylakoid membrane. In terms of biological role, rod linker protein, associated with phycocyanin. Linker polypeptides determine the state of aggregation and the location of the disk-shaped phycobiliprotein units within the phycobilisome and modulate their spectroscopic properties in order to mediate a directed and optimal energy transfer. The sequence is that of Phycobilisome 9.7 kDa linker polypeptide, phycocyanin-associated, rod (cpcD2) from Microchaete diplosiphon (Fremyella diplosiphon).